The sequence spans 273 residues: MSILEKITSSPSECAEHLTNKDSCLSKKIQKELTSFLQKKETLGCDSESCVITHPAVKAYAQQKGLDLSKELETRFKAPGPRNNTGLLTNFNIDETLQRWAIKYTKFFNCPFSMMDFERVHYKFNQVDMVKVYKGEELQYVEGKVVKRPCNTFGCVLNTDFSTGTGKHWVAIFVDMRGDCWSIEYFNSAGNAPPGPVIRWMERVKQQLLKIHHTVKTLAVTNIRHQRSQTECGPYSLFYIRARLDNVSYAHFISARITDEDMYKFRTHLFRIA.

Active-site residues include histidine 168 and asparagine 187. Glutamine 226 lines the substrate pocket. The active-site Nucleophile is the cysteine 232.

This sequence belongs to the peptidase C63 family.

It is found in the host cytoplasm. The protein resides in the virion. Functionally, cysteine protease that plays several role during infection including processing of the structural polyprotein or inhibition of the host immune response. Catalyzes the maturation of the pp220 and pp62 polyprotein precursors into core-shell proteins. Plays a role in the disruption of host pyroptosis via specific cleavage of gasdermin D/GSDMD. In addition, strongly decreases the host cGAS-STING signaling by targeting IKBKE via its enzymatic activity. Also impairs host FOXJ1-mediated antiviral effect via degradation of FOXJ1. The protein is SUMO-1 cysteine protease S273R of Ornithodoros (relapsing fever ticks).